The following is an 814-amino-acid chain: Protein kinase C-binding protein NELL2 (814 aa).

The signal sequence occupies residues 1–19 (MEFILGIFCVLFCLRAGAG). N-linked (GlcNAc...) asparagine glycosylation is found at asparagine 51, asparagine 223, and asparagine 296. Residues 53–226 (SKAFLFQDTS…SQCPDLNRTC (174 aa)) form the Laminin G-like domain. The 60-residue stretch at 270 to 329 (RSCTVKGNIYRELESWMDGCKKCTCTNGTAQCETLTCSAPNCLSGFSPAYVPGKCCKECQ) folds into the VWFC 1 domain. Residues 395 to 437 (GHDFCSEGHNCMGYSICKNLDDKAVCICRDGFRALREDNAYCE) enclose the EGF-like 1 domain. 3 disulfide bridges follow: cysteine 399–cysteine 411, cysteine 405–cysteine 420, and cysteine 422–cysteine 436. The Ca(2+) site is built by aspartate 438, isoleucine 439, and glutamate 441. The region spanning 438-479 (DIDECTEGRHYCRENTVCVNTPGSFMCVCQTGYLKIDDYSCT) is the EGF-like 2; calcium-binding domain. Intrachain disulfides connect cysteine 442-cysteine 455, cysteine 449-cysteine 464, cysteine 466-cysteine 478, cysteine 484-cysteine 497, cysteine 491-cysteine 506, cysteine 508-cysteine 519, cysteine 523-cysteine 533, cysteine 527-cysteine 539, and cysteine 541-cysteine 550. Residues asparagine 457, threonine 458, and serine 461 each coordinate Ca(2+). Residues 480 to 520 (EHNECATNQHSCDENAMCFNTVGGHNCVCQPGYTGNGTDCR) form the EGF-like 3; calcium-binding domain. N-linked (GlcNAc...) asparagine glycosylation is present at asparagine 515. Residues 521–551 (AFCKDGCRNGGTCIAPNICACPQGFTGPSCE) form the EGF-like 4 domain. The Ca(2+) site is built by aspartate 553, isoleucine 554, and glutamate 556. The region spanning 553–599 (DIDECTEGFVQCDSRANCINLPGWYHCECRDGYHDNGMFSLGGESCE) is the EGF-like 5; calcium-binding domain. Cystine bridges form between cysteine 557/cysteine 570, cysteine 564/cysteine 579, and cysteine 581/cysteine 598. The Ca(2+) site is built by asparagine 572, leucine 573, and tryptophan 576. Ca(2+) is bound by residues aspartate 600, isoleucine 601, and glutamate 603. The 36-residue stretch at 600–635 (DIDECATGRHSCSNDTVCFNLDGGFDCRCPHGKNCS) folds into the EGF-like 6; calcium-binding domain. 3 disulfides stabilise this stretch: cysteine 604-cysteine 617, cysteine 611-cysteine 626, and cysteine 628-cysteine 634. Asparagine 613 is a glycosylation site (N-linked (GlcNAc...) asparagine). Residues asparagine 619, leucine 620, and glycine 623 each coordinate Ca(2+). Residue asparagine 633 is glycosylated (N-linked (GlcNAc...) asparagine). VWFC domains lie at 636–691 (GDCT…PECD) and 696–754 (SQCL…PRCV).

As to quaternary structure, homotrimer.

Its subcellular location is the secreted. Its function is as follows. May regulate neuronal differentiation, polarization and axon guidance. This is Protein kinase C-binding protein NELL2 (nell2.L) from Xenopus laevis (African clawed frog).